The chain runs to 344 residues: MPKKLVLVIDRDDDLGQKAGISSPVIGRDNIVSAAVRLGTADPEDSDVNAMFAAIKIYDELKGRGEDVEVVVVCGDRSVGVVSDSKIAEQLDRVVLNLRPSSAIVVTDGSEDEFVLPIISSRVKIDSVHRVVVRQSRTIESTYFLIRRMLNDPKIARITLAPLGMIFLVYSIFLVMQHPEWGLGGIIFFLGVYFMVKAYGWEQNIANLLETVRVSLVEGRLSFIFYVTSAILLIISIVNGFNAAVNIADAAQAISSFIFYSTWWFVLSGIFALLARAADAYAEKRRVSKYFTIIFLLIAFGLIVWASAAYVLNPEAPNALQNLAGAIVGAILIAAIGVFTLKRL.

The next 6 helical transmembrane spans lie at I155 to V175, W181 to W201, L221 to F241, I254 to L274, F291 to V311, and A319 to F339.

This sequence to M.jannaschii MJ1032.

Its subcellular location is the cell membrane. This is an uncharacterized protein from Archaeoglobus fulgidus (strain ATCC 49558 / DSM 4304 / JCM 9628 / NBRC 100126 / VC-16).